Consider the following 424-residue polypeptide: Protein shisa-9 (424 aa).

A signal peptide spans 1 to 23; it reads MRRVLRLLLGCFLTELCARMCRA. The Extracellular portion of the chain corresponds to 24–149; sequence QERSGHGQLA…DPLHDPTKDK (126 aa). Residues N45, N89, and N116 are each glycosylated (N-linked (GlcNAc...) asparagine). Residues 150–170 form a helical membrane-spanning segment; sequence TNLIVYIICGVVAVMVLVGIF. Over 171–424 the chain is Cytoplasmic; sequence TKLGLEKAHR…ITNSKTEVTV (254 aa). Disordered regions lie at residues 333–373 and 389–424; these read PRAF…TWDP and LGIA…EVTV. Composition is skewed to polar residues over residues 362–373 and 402–424; these read YNSTANFKTWDP and TRTQ…EVTV.

It belongs to the shisa family. SHISA9 subfamily. In terms of assembly, component of some AMPA receptors (ionotropic glutamate receptors) complex, at least composed of some AMPA receptor (GRIA1, GRIA2 and/or GRIA3), CACNG2 and SHISA9, as well as low level of DLG4. Brain-specific. Mainly expressed in neurons, including in hippocampus, cerebral cortex, striatum, thalamus, olfactory bulb and cerebellum. Expressed in most brain structures during embryonic and postnatal development.

Its subcellular location is the cell projection. It is found in the dendritic spine membrane. The protein localises to the synapse. Functionally, regulator of short-term neuronal synaptic plasticity in the dentate gyrus. Associates with AMPA receptors (ionotropic glutamate receptors) in synaptic spines and promotes AMPA receptor desensitization at excitatory synapses. This is Protein shisa-9 (Shisa9) from Mus musculus (Mouse).